The chain runs to 330 residues: (11Z)-hexadec-11-enoyl-CoA conjugase (330 aa).

2 consecutive transmembrane segments (helical) span residues 37–57 (IVVMNVIRFSYLHIAGLYGLY) and 65–85 (LATSVFAIVLFFLGNFGITAG). The Histidine box-1 signature appears at 87-92 (HRLWSH). A helical transmembrane segment spans residues 101–121 (LEILLMVFNSIAFQNTIFTWV). The short motif at 124 to 128 (HRLHH) is the Histidine box-2 element. Helical transmembrane passes span 185–205 (AIPFIGTICFIIPTLAPMYFW) and 216–238 (TVLRYIFSLNGTFLVNSAAHLWG). The Histidine box-3 signature appears at 264–268 (HNYHH).

The protein belongs to the fatty acid desaturase type 1 family. Requires Fe(2+) as cofactor. As to expression, highly expressed in the pheromone gland.

It is found in the membrane. The catalysed reaction is an 11,12-saturated fatty acyl-CoA + 2 Fe(II)-[cytochrome b5] + O2 + 2 H(+) = an (11Z)-Delta(11)-fatty acyl-CoA + 2 Fe(III)-[cytochrome b5] + 2 H2O. It catalyses the reaction (11Z)-hexadecenoyl-CoA + AH2 + O2 = (10E,12Z)-hexadecadienoyl-CoA + A + 2 H2O. Functionally, fatty acid desaturase that catalyzes 2 consecutive steps in the biosynthesis of bombykol, a sex pheromone produced by the moth. First acts as an acyl-CoA Delta(11) desaturase (1) by catalyzing the formation of Delta(11) fatty acyl precursors. Then acts as a (11Z)-hexadec-11-enoyl-CoA conjugase (2) by converting a single cis double bond at position 11 of (11Z)-hexadec-11-enoyl-CoA into conjugated 10 trans and 12 cis double bonds. The polypeptide is (11Z)-hexadec-11-enoyl-CoA conjugase (Bombyx mori (Silk moth)).